The primary structure comprises 374 residues: Queuine tRNA-ribosyltransferase (374 aa).

Residue D91 is the Proton acceptor of the active site. Residues 91–95, D145, Q189, and G216 each bind substrate; that span reads DSGGY. Positions 247 to 253 are RNA binding; it reads GVGTVPD. The active-site Nucleophile is D266. Residues 271 to 275 form an RNA binding; important for wobble base 34 recognition region; it reads TRNAR. Zn(2+) contacts are provided by C304, C306, C309, and H335.

Belongs to the queuine tRNA-ribosyltransferase family. In terms of assembly, homodimer. Within each dimer, one monomer is responsible for RNA recognition and catalysis, while the other monomer binds to the replacement base PreQ1. The cofactor is Zn(2+).

The catalysed reaction is 7-aminomethyl-7-carbaguanine + guanosine(34) in tRNA = 7-aminomethyl-7-carbaguanosine(34) in tRNA + guanine. The protein operates within tRNA modification; tRNA-queuosine biosynthesis. Functionally, catalyzes the base-exchange of a guanine (G) residue with the queuine precursor 7-aminomethyl-7-deazaguanine (PreQ1) at position 34 (anticodon wobble position) in tRNAs with GU(N) anticodons (tRNA-Asp, -Asn, -His and -Tyr). Catalysis occurs through a double-displacement mechanism. The nucleophile active site attacks the C1' of nucleotide 34 to detach the guanine base from the RNA, forming a covalent enzyme-RNA intermediate. The proton acceptor active site deprotonates the incoming PreQ1, allowing a nucleophilic attack on the C1' of the ribose to form the product. After dissociation, two additional enzymatic reactions on the tRNA convert PreQ1 to queuine (Q), resulting in the hypermodified nucleoside queuosine (7-(((4,5-cis-dihydroxy-2-cyclopenten-1-yl)amino)methyl)-7-deazaguanosine). This Leptospira borgpetersenii serovar Hardjo-bovis (strain JB197) protein is Queuine tRNA-ribosyltransferase.